Reading from the N-terminus, the 519-residue chain is Protein BANP (519 aa).

3 positions are modified to phosphoserine: Ser19, Ser90, and Ser100. Residues 53-90 (IKTICLRLDSIEAKLQALEATCKSLEEKLDLVTNKQHS) adopt a coiled-coil conformation. A Glycyl lysine isopeptide (Lys-Gly) (interchain with G-Cter in SUMO2) cross-link involves residue Lys133. The segment at 152–342 (NAVPGRRQNT…FSRRTPNSSS (191 aa)) is interaction with CUX1 and HDAC1. Over residues 168–177 (GQEDSHHEDG) the composition is skewed to basic and acidic residues. The disordered stretch occupies residues 168–196 (GQEDSHHEDGESGSEASDSVSSCGQAGSQ). The span at 180–189 (GSEASDSVSS) shows a compositional bias: low complexity. Residues 226 to 322 (EMRVRCAIIP…SKCRTAWRRK (97 aa)) form the BEN domain. Lys275 is subject to N6-acetyllysine. Residues 327-364 (SLAVKSFSRRTPNSSSYCPSEPMMSTPPPASELPQPQP) are disordered. Polar residues predominate over residues 335–344 (RRTPNSSSYC). Phosphothreonine occurs at positions 337 and 352. The interval 342–393 (SYCPSEPMMSTPPPASELPQPQPQPQALHYALANAQQVQIHQIGEDGQVQVG) is DNA-binding. The span at 351–364 (STPPPASELPQPQP) shows a compositional bias: pro residues.

This sequence belongs to the BANP/SMAR1 family. Part of a corepressor complex containing BANP, HDAC1, SIN3A, SIN3B, RBL1 and RBL2. Forms a trimeric complex in the nucleus consisting of BANP, HDAC6 and KHDRBS1/SAM68; HDAC6 keeps KHDRBS1 in a deacetylated state which inhibits the inclusion of CD44 alternate exons. The complex is disrupted by MAPK1/MAPK3-mediated phosphorylation of BANP which results in BANP export to the cytoplasm. This facilitates acetylation of KHDRBS1 and CD44 variant exon inclusion. Interacts with TP53. Interacts with CUX1/CDP. Interacts with HDAC1. MAPK1/MAPK3-mediated phosphorylation at Thr-337 and Thr-352 results in export to the cytoplasm. Down-regulated in breast cancer cell lines.

The protein localises to the nucleus. It is found in the nucleus speckle. Its subcellular location is the cytoplasm. Its function is as follows. Controls V(D)J recombination during T-cell development by repressing T-cell receptor (TCR) beta enhancer function. Binds to scaffold/matrix attachment region beta (S/MARbeta), an ATC-rich DNA sequence located upstream of the TCR beta enhancer. Represses cyclin D1 transcription by recruiting HDAC1 to its promoter, thereby diminishing H3K9ac, H3S10ph and H4K8ac levels. Promotes TP53 activation, which causes cell cycle arrest. Plays a role in the regulation of alternative splicing. Binds to CD44 pre-mRNA and negatively regulates the inclusion of CD44 proximal variable exons v2-v6 but has no effect on distal variable exons v7-v10. This is Protein BANP (BANP) from Homo sapiens (Human).